The following is a 790-amino-acid chain: Kinesin-like protein KIF9 (790 aa).

A Kinesin motor domain is found at 6–340 (KVQAFVRVRP…LRFASRMKLV (335 aa)). ATP is bound by residues 12–14 (RVR) and 93–100 (GQTGAGKT). The stretch at 342–442 (TEPAINEKYD…EQEVESALRR (101 aa)) forms a coiled coil. Residues 482–521 (GVAPFSVKPGKKPKTKKTPKDQFSSSARKEGASSPVSGKD) form a disordered region. Residue threonine 530 is modified to Phosphothreonine. Positions 547–577 (RERETSSIEPLISDSPKEELRAPRPSTPPSR) are disordered. Positions 600–695 (KSILNERKKR…YCQRLVDQCR (96 aa)) form a coiled coil.

The protein belongs to the TRAFAC class myosin-kinesin ATPase superfamily. Kinesin family. Interacts with HYDIN. Highly expressed in the testis (at protein level). Weakly expressed in the brain, thymus, lung and heart.

Its subcellular location is the cytoplasm. It is found in the cytoskeleton. It localises to the cell projection. The protein resides in the cilium. The protein localises to the flagellum. Its subcellular location is the flagellum axoneme. Essential for normal male fertility and for progressive motility of spermatozoa. In Mus musculus (Mouse), this protein is Kinesin-like protein KIF9 (Kif9).